Consider the following 421-residue polypeptide: Pyridinium-3,5-bisthiocarboxylic acid mononucleotide nickel insertion protein (421 aa).

Belongs to the LarC family.

The enzyme catalyses Ni(II)-pyridinium-3,5-bisthiocarboxylate mononucleotide = pyridinium-3,5-bisthiocarboxylate mononucleotide + Ni(2+). In terms of biological role, involved in the biosynthesis of a nickel-pincer cofactor ((SCS)Ni(II) pincer complex). Binds Ni(2+), and functions in nickel delivery to pyridinium-3,5-bisthiocarboxylic acid mononucleotide (P2TMN), to form the mature cofactor. Is thus probably required for the activation of nickel-pincer cofactor-dependent enzymes. This Alkaliphilus metalliredigens (strain QYMF) protein is Pyridinium-3,5-bisthiocarboxylic acid mononucleotide nickel insertion protein.